A 490-amino-acid polypeptide reads, in one-letter code: Alginate production protein AlgE (490 aa).

The signal sequence occupies residues 1-32 (MNSSRSVNPRPSFAPRALSLAIALLLGAPAFA). Polar residues-rich tracts occupy residues 102–115 (DTLQ…NNSR) and 343–355 (QFQQ…NRSN). Disordered regions lie at residues 102 to 121 (DTLQ…GREP) and 331 to 355 (ARGS…NRSN).

This sequence belongs to the AlgE family.

The protein localises to the cell outer membrane. Its pathway is glycan biosynthesis; alginate biosynthesis. Its function is as follows. Has non-porin-like, channel-forming properties and probably functions as an alginate permeability pore. The sequence is that of Alginate production protein AlgE (algE) from Pseudomonas aeruginosa (strain ATCC 15692 / DSM 22644 / CIP 104116 / JCM 14847 / LMG 12228 / 1C / PRS 101 / PAO1).